Reading from the N-terminus, the 347-residue chain is MVVLKQEEVPECLRYLPRNYNFETGKVLRTIRRLGAKRVTLQFPDGLLRYSFVIMDVIEKYTGAECILLNDVVYGGCCIDDESIASDLLVHYGHSCLVPVGEMSTKVLYIFVDIRIDIDHAAEMIRRNFQGKIGVIGTIQFNSSINRLKRVLDEERGGVECTLPQIRPLSSGEVLGCTAPKIEGVSAVISIGDGRFHLEGAMIRNPHLRFYKYCPFSRRMTQESYDHSTMLSDRKSEIRKAFSGRSFGVILGSLGRQGNRSILRSVVDRLKEYDVYLIMLDEISPKKLERYNFIDSFVQISCPRLSIDWGKLFKKPLLTPFEVFYSGGEYLMDYYSREGSGEWKNYR.

[4Fe-4S] cluster-binding residues include cysteine 77, cysteine 177, and cysteine 302.

This sequence belongs to the DPH1/DPH2 family. DPH1 subfamily. In terms of assembly, component of the 2-(3-amino-3-carboxypropyl)histidine synthase complex composed of DPH1, DPH2, DPH3 and a NADH-dependent reductase, predominantly CBR1. It depends on [4Fe-4S] cluster as a cofactor.

Its subcellular location is the cytoplasm. It carries out the reaction L-histidyl-[translation elongation factor 2] + S-adenosyl-L-methionine = 2-[(3S)-amino-3-carboxypropyl]-L-histidyl-[translation elongation factor 2] + S-methyl-5'-thioadenosine + H(+). The protein operates within protein modification; peptidyl-diphthamide biosynthesis. Functionally, catalyzes the first step of diphthamide biosynthesis, a post-translational modification of histidine which occurs in elongation factor 2. DPH1 and DPH2 transfer a 3-amino-3-carboxypropyl (ACP) group from S-adenosyl-L-methionine (SAM) to a histidine residue, the reaction is assisted by a reduction system comprising DPH3 and a NADH-dependent reductase, predominantly CBR1. This is 2-(3-amino-3-carboxypropyl)histidine synthase subunit 1 (DPH1) from Encephalitozoon cuniculi (strain GB-M1) (Microsporidian parasite).